Reading from the N-terminus, the 340-residue chain is Heat-inducible transcription repressor HrcA (340 aa).

This sequence belongs to the HrcA family.

In terms of biological role, negative regulator of class I heat shock genes (grpE-dnaK-dnaJ and groELS operons). Prevents heat-shock induction of these operons. The chain is Heat-inducible transcription repressor HrcA from Chromobacterium violaceum (strain ATCC 12472 / DSM 30191 / JCM 1249 / CCUG 213 / NBRC 12614 / NCIMB 9131 / NCTC 9757 / MK).